Here is a 35-residue protein sequence, read N- to C-terminus: Mu-theraphotoxin-Pn3b (35 aa).

3 disulfides stabilise this stretch: Cys2/Cys16, Cys9/Cys21, and Cys15/Cys28.

It belongs to the neurotoxin 10 (Hwtx-1) family. 28 (Jztx-11) subfamily. Expressed by the venom gland.

It localises to the secreted. Functionally, gating-modifier toxin that targets voltage-gated sodium channels with a preferential activity on Nav1.7/SCN9A. On Nav1.7/SCN9A, the toxin acts by shifting the voltage-dependence of activation to more depolarized potentials, whereas it does not cause significant effect on the voltage-dependence of activation on other sodium channels. Minor effects are observed on the voltage-dependence of steady-state fast inactivation for all sodium channels tested (Nav1.1/SCN1A-Nav1.8/SCN10A). By testing the toxin on channel chimera, it has been shown to interact with the S3-S4 linkers in DII and DIV domains of Nav1.7/SCN9A. In vivo, the toxin dose-dependently reduces OD1-induced spontaneous pain behaviors. This is Mu-theraphotoxin-Pn3b from Pamphobeteus nigricolor (Giant blue bloom tarantula).